Here is a 589-residue protein sequence, read N- to C-terminus: Transmembrane 9 superfamily member 1 (589 aa).

Residues 1-24 form the signal peptide; that stretch reads MPSSSSAAVLVFLLLVSLLTPTFA. The Lumenal segment spans residues 25 to 222; that stretch reads SDSDHKYQAE…YPFFEHQIHW (198 aa). The chain crosses the membrane as a helical span at residues 223-243; the sequence is FSIFNSFMMVIFLTGLVSMIL. Residues 244–293 are Cytoplasmic-facing; sequence MRTLRNDYAKYAREDDDLESLERDVSEESGWKLVHGDVFRPASSLVLLSA. The helical transmembrane segment at 294 to 314 threads the bilayer; it reads VVGTGAQLALLVLLVILMAIV. The Lumenal portion of the chain corresponds to 315–321; that stretch reads GTLYVGR. A helical membrane pass occupies residues 322–342; it reads GAIVTTFIVCYALTSFVSGYV. Topologically, residues 343-364 are cytoplasmic; it reads SGGMYSRSGGKHWIKCMVLTAS. Residues 365 to 385 traverse the membrane as a helical segment; the sequence is LFPFLCFGIGFLLNTIAIFYG. The Lumenal segment spans residues 386 to 395; sequence SLAAIPFGTM. The chain crosses the membrane as a helical span at residues 396-416; the sequence is VVVFVIWGFISFPLALLGTVV. At 417–448 the chain is on the cytoplasmic side; it reads GRNWSGAPNNPCRVKTIPRPIPEKKWYLTPSV. Residues 449–469 form a helical membrane-spanning segment; it reads VSLMGGLLPFGSIFIEMYFVF. The Lumenal portion of the chain corresponds to 470 to 481; sequence TSFWNYKVYYVY. The chain crosses the membrane as a helical span at residues 482-502; the sequence is GFMLLVFVILVIVTVCVTIVG. Residues 503 to 518 lie on the Cytoplasmic side of the membrane; that stretch reads TYFLLNAENYHWQWTS. A helical transmembrane segment spans residues 519 to 539; it reads FFSAASTAVYVYLYSIYYYYV. Over 540-550 the chain is Lumenal; the sequence is KTKMSGFFQTS. The helical transmembrane segment at 551–571 threads the bilayer; that stretch reads FYFGYTMMFCLGLGILCGAVG. At 572-589 the chain is on the cytoplasmic side; the sequence is YLGSNLFVRRIYRNIKCD. An Endoplasmic reticulum export signal motif is present at residues 578–583; sequence FVRRIY. Positions 587 to 589 match the Golgi retention signal motif; sequence KCD.

This sequence belongs to the nonaspanin (TM9SF) (TC 9.A.2) family. As to expression, ubiquitous.

It localises to the endosome membrane. Its subcellular location is the golgi apparatus membrane. This chain is Transmembrane 9 superfamily member 1, found in Arabidopsis thaliana (Mouse-ear cress).